A 275-amino-acid chain; its full sequence is 4-deoxy-L-threo-5-hexosulose-uronate ketol-isomerase (275 aa).

His193, His195, Glu200, and His242 together coordinate Zn(2+).

This sequence belongs to the KduI family. It depends on Zn(2+) as a cofactor.

It catalyses the reaction 5-dehydro-4-deoxy-D-glucuronate = 3-deoxy-D-glycero-2,5-hexodiulosonate. It functions in the pathway glycan metabolism; pectin degradation; 2-dehydro-3-deoxy-D-gluconate from pectin: step 4/5. Functionally, catalyzes the isomerization of 5-dehydro-4-deoxy-D-glucuronate to 3-deoxy-D-glycero-2,5-hexodiulosonate. The sequence is that of 4-deoxy-L-threo-5-hexosulose-uronate ketol-isomerase from Bacillus pumilus (strain SAFR-032).